The primary structure comprises 313 residues: Protein-glutamine deamidase Cif (313 aa).

Residues Cys-128, His-186, and Gln-205 contribute to the active site.

It belongs to the Cif family.

It is found in the secreted. It localises to the host nucleus. It carries out the reaction L-glutaminyl-[protein] + H2O = L-glutamyl-[protein] + NH4(+). In terms of biological role, protein-glutamine deamidase effector that inhibits the host cell cycle and other key cellular processes such as the actin network and programmed-cell death. Acts by mediating the side chain deamidation of 'Gln-40' of host NEDD8, converting it to glutamate, thereby abolishing the activity of cullin-RING-based E3 ubiquitin-protein ligase complexes (CRL complexes). Inactivation of CRL complexes prevents ubiquitination and subsequent degradation of the cyclin-dependent kinase inhibitors CDKN1A/p21 and CDKN1B/p27, leading to G1 and G2 cell cycle arrests in host cells. Deamidation of 'Gln-40' of host NEDD8 also triggers macrophage-specific programmed cell death. Also able to catalyze deamidation of 'Gln-40' of host ubiquitin in vitro; however, NEDD8 constitutes the preferred substrate in vivo. The sequence is that of Protein-glutamine deamidase Cif from Photorhabdus laumondii subsp. laumondii (strain DSM 15139 / CIP 105565 / TT01) (Photorhabdus luminescens subsp. laumondii).